The following is a 347-amino-acid chain: Rhodopsin (347 aa).

Residues 1–33 (TEGPDFYIPMVNTTGVVRSPYEYPQYYLVNPAA) are Extracellular-facing. Asparagine 12 carries an N-linked (GlcNAc...) asparagine glycan. The helical transmembrane segment at 34-58 (FAVLGAYMFFLIIIGFPINFLTLYV) threads the bilayer. Over 59–70 (TLEHKKLRTPLN) the chain is Cytoplasmic. A helical membrane pass occupies residues 71–93 (YILLNLAVADLFMVIGGFTTTMY). The Extracellular segment spans residues 94–107 (SSMHGYFVLGRLGC). The cysteines at positions 107 and 184 are disulfide-linked. Residues 108 to 130 (NIEGFFATLGGMISLWSLAVLAI) traverse the membrane as a helical segment. A 'Ionic lock' involved in activated form stabilization motif is present at residues 131 to 133 (ERW). Over 131 to 149 (ERWVVVCKPISNFRFGENH) the chain is Cytoplasmic. A helical transmembrane segment spans residues 150–170 (AIMGVSLTWVMALACTVPPLV). Residues 171 to 199 (GWSRYIPEGMQCACGIDYYTRAEGYNNES) are Extracellular-facing. N-linked (GlcNAc...) asparagine glycosylation is present at asparagine 197. A helical membrane pass occupies residues 200–221 (FVIYMFTFHFLFPMFIIFFCYG). The Cytoplasmic portion of the chain corresponds to 222-249 (RLLCAVKEAAAAQQESETTQRAEREVTR). The chain crosses the membrane as a helical span at residues 250–271 (MVILMVIGYLVCWLPYASVAWF). At 272 to 283 (IFTHKGSEFGPL) the chain is on the extracellular side. Residues 284-305 (FMAVPSFFAKSSSIYNPIIYIC) traverse the membrane as a helical segment. Residue lysine 293 is modified to N6-(retinylidene)lysine. The Cytoplasmic segment spans residues 306 to 347 (MNKQFRQCMITTLFCGKNPFEGQEEDSSTKTEASSASSVSPA). The S-palmitoyl cysteine moiety is linked to residue cysteine 320. The tract at residues 326-347 (EGQEEDSSTKTEASSASSVSPA) is disordered. Positions 335 to 347 (KTEASSASSVSPA) are enriched in low complexity.

The protein belongs to the G-protein coupled receptor 1 family. Opsin subfamily. Phosphorylated on some or all of the serine and threonine residues present in the C-terminal region. In terms of processing, contains one covalently linked retinal chromophore.

The protein localises to the membrane. It localises to the cell projection. It is found in the cilium. The protein resides in the photoreceptor outer segment. Its function is as follows. Photoreceptor required for image-forming vision at low light intensity. While most salt water fish species use retinal as chromophore, most freshwater fish use 3-dehydroretinal, or a mixture of retinal and 3-dehydroretinal. Light-induced isomerization of 11-cis to all-trans retinal triggers a conformational change that activates signaling via G-proteins. Subsequent receptor phosphorylation mediates displacement of the bound G-protein alpha subunit by arrestin and terminates signaling. This chain is Rhodopsin (rho), found in Sargocentron tiere (Blue lined squirrelfish).